The primary structure comprises 213 residues: uncharacterized protein (213 aa).

S-adenosyl-L-methionine-binding residues include glycine 53, glutamate 74, and aspartate 96.

This sequence belongs to the methyltransferase superfamily. YrrT family.

Functionally, could be a S-adenosyl-L-methionine-dependent methyltransferase. This is an uncharacterized protein from Oceanobacillus iheyensis (strain DSM 14371 / CIP 107618 / JCM 11309 / KCTC 3954 / HTE831).